Reading from the N-terminus, the 344-residue chain is Dihydroorotase (344 aa).

Positions 13 and 15 each coordinate Zn(2+). Substrate-binding positions include 15–17 (HFR) and Asn41. Zn(2+) is bound by residues Lys98, His135, and His173. Position 98 is an N6-carboxylysine (Lys98). His135 is a binding site for substrate. Leu218 lines the substrate pocket. Asp246 serves as a coordination point for Zn(2+). Residue Asp246 is part of the active site. The substrate site is built by His250 and Ala262.

Belongs to the metallo-dependent hydrolases superfamily. DHOase family. Class II DHOase subfamily. In terms of assembly, homodimer. It depends on Zn(2+) as a cofactor.

It carries out the reaction (S)-dihydroorotate + H2O = N-carbamoyl-L-aspartate + H(+). Its pathway is pyrimidine metabolism; UMP biosynthesis via de novo pathway; (S)-dihydroorotate from bicarbonate: step 3/3. In terms of biological role, catalyzes the reversible cyclization of carbamoyl aspartate to dihydroorotate. The polypeptide is Dihydroorotase (Pseudoalteromonas atlantica (strain T6c / ATCC BAA-1087)).